Consider the following 369-residue polypeptide: Pyrimidine monooxygenase RutA (369 aa).

FMN-binding positions include I49–K50, N115, E124, R140–Y141, and S190.

The protein belongs to the NtaA/SnaA/DszA monooxygenase family. RutA subfamily.

It catalyses the reaction uracil + FMNH2 + NADH + O2 = (Z)-3-ureidoacrylate + FMN + NAD(+) + H2O + H(+). The catalysed reaction is thymine + FMNH2 + NADH + O2 = (Z)-2-methylureidoacrylate + FMN + NAD(+) + H2O + H(+). Functionally, catalyzes the pyrimidine ring opening between N-3 and C-4 by an unusual flavin hydroperoxide-catalyzed mechanism, adding oxygen atoms in the process to yield ureidoacrylate peracid, that immediately reacts with FMN forming ureidoacrylate and FMN-N(5)-oxide. The FMN-N(5)-oxide reacts spontaneously with NADH to produce FMN. Requires the flavin reductase RutF to regenerate FMN in vivo. The sequence is that of Pyrimidine monooxygenase RutA from Acinetobacter baylyi (strain ATCC 33305 / BD413 / ADP1).